A 101-amino-acid chain; its full sequence is Protein RnfH (101 aa).

Belongs to the UPF0125 (RnfH) family.

This chain is Protein RnfH, found in Coxiella burnetii (strain CbuK_Q154) (Coxiella burnetii (strain Q154)).